Here is a 425-residue protein sequence, read N- to C-terminus: Serine hydroxymethyltransferase (425 aa).

(6S)-5,6,7,8-tetrahydrofolate contacts are provided by residues L120 and 124-126 (GHL). The residue at position 229 (K229) is an N6-(pyridoxal phosphate)lysine. 353 to 355 (SPF) is a binding site for (6S)-5,6,7,8-tetrahydrofolate.

Belongs to the SHMT family. As to quaternary structure, homodimer. Pyridoxal 5'-phosphate serves as cofactor.

The protein localises to the cytoplasm. The catalysed reaction is (6R)-5,10-methylene-5,6,7,8-tetrahydrofolate + glycine + H2O = (6S)-5,6,7,8-tetrahydrofolate + L-serine. It functions in the pathway one-carbon metabolism; tetrahydrofolate interconversion. The protein operates within amino-acid biosynthesis; glycine biosynthesis; glycine from L-serine: step 1/1. Catalyzes the reversible interconversion of serine and glycine with tetrahydrofolate (THF) serving as the one-carbon carrier. This reaction serves as the major source of one-carbon groups required for the biosynthesis of purines, thymidylate, methionine, and other important biomolecules. Also exhibits THF-independent aldolase activity toward beta-hydroxyamino acids, producing glycine and aldehydes, via a retro-aldol mechanism. The chain is Serine hydroxymethyltransferase from Thermosynechococcus vestitus (strain NIES-2133 / IAM M-273 / BP-1).